Reading from the N-terminus, the 141-residue chain is Lutropin subunit beta (141 aa).

An N-terminal signal peptide occupies residues 1-20 (MEMLQGLLLWLLLSVGGVWA). Intrachain disulfides connect C29–C77, C43–C92, C46–C130, C54–C108, C58–C110, and C113–C120. N-linked (GlcNAc...) asparagine glycosylation occurs at N33.

This sequence belongs to the glycoprotein hormones subunit beta family. Heterodimer of a common alpha chain and a unique beta chain which confers biological specificity to thyrotropin, lutropin, follitropin and gonadotropin.

Its subcellular location is the secreted. In terms of biological role, promotes spermatogenesis and ovulation by stimulating the testes and ovaries to synthesize steroids. In Ceratotherium simum (White rhinoceros), this protein is Lutropin subunit beta (LHB1).